Here is a 444-residue protein sequence, read N- to C-terminus: Ribosomal protein uS12 methylthiotransferase RimO (444 aa).

Residues 2–118 (LKIALESLGC…IDKILKELSE (117 aa)) enclose the MTTase N-terminal domain. [4Fe-4S] cluster is bound by residues Cys-11, Cys-47, Cys-81, Cys-155, Cys-159, and Cys-162. In terms of domain architecture, Radical SAM core spans 141–371 (STPSYMAYLK…MMIQQKISEE (231 aa)). In terms of domain architecture, TRAM spans 374 to 441 (DKKIGKTYEV…EYDLMGDVLY (68 aa)).

Belongs to the methylthiotransferase family. RimO subfamily. [4Fe-4S] cluster is required as a cofactor.

Its subcellular location is the cytoplasm. The enzyme catalyses L-aspartate(89)-[ribosomal protein uS12]-hydrogen + (sulfur carrier)-SH + AH2 + 2 S-adenosyl-L-methionine = 3-methylsulfanyl-L-aspartate(89)-[ribosomal protein uS12]-hydrogen + (sulfur carrier)-H + 5'-deoxyadenosine + L-methionine + A + S-adenosyl-L-homocysteine + 2 H(+). Catalyzes the methylthiolation of an aspartic acid residue of ribosomal protein uS12. This is Ribosomal protein uS12 methylthiotransferase RimO from Clostridioides difficile (strain 630) (Peptoclostridium difficile).